The sequence spans 115 residues: NADH-ubiquinone oxidoreductase chain 3 (115 aa).

The next 3 membrane-spanning stretches (helical) occupy residues 1–21, 55–75, and 87–107; these read MITL…LLII, FFLV…LFPL, and AIIL…YEWL.

The protein belongs to the complex I subunit 3 family.

It localises to the mitochondrion membrane. It catalyses the reaction a ubiquinone + NADH + 5 H(+)(in) = a ubiquinol + NAD(+) + 4 H(+)(out). Its function is as follows. Core subunit of the mitochondrial membrane respiratory chain NADH dehydrogenase (Complex I) that is believed to belong to the minimal assembly required for catalysis. Complex I functions in the transfer of electrons from NADH to the respiratory chain. The immediate electron acceptor for the enzyme is believed to be ubiquinone. The protein is NADH-ubiquinone oxidoreductase chain 3 (MT-ND3) of Myxine glutinosa (Atlantic hagfish).